Reading from the N-terminus, the 162-residue chain is Small ribosomal subunit protein uS13 (162 aa).

Residues 142 to 162 form a disordered region; the sequence is RGQRTKSTGRRGSTVGVSRKK.

Belongs to the universal ribosomal protein uS13 family. Part of the 30S ribosomal subunit. Forms a loose heterodimer with protein S19. Forms two bridges to the 50S subunit in the 70S ribosome.

Functionally, located at the top of the head of the 30S subunit, it contacts several helices of the 16S rRNA. In the 70S ribosome it contacts the 23S rRNA (bridge B1a) and protein L5 of the 50S subunit (bridge B1b), connecting the 2 subunits; these bridges are implicated in subunit movement. This Methanosarcina acetivorans (strain ATCC 35395 / DSM 2834 / JCM 12185 / C2A) protein is Small ribosomal subunit protein uS13.